The sequence spans 391 residues: uncharacterized protein (391 aa).

It belongs to the mycobacterial PPE family.

This is an uncharacterized protein from Mycobacterium tuberculosis (strain CDC 1551 / Oshkosh).